We begin with the raw amino-acid sequence, 575 residues long: Malto-oligosyltrehalose trehalohydrolase (575 aa).

248 to 253 (RLDAVH) is a substrate binding site. The Nucleophile role is filled by Asp250. The active-site Proton donor is Glu287. Substrate-binding positions include 312-316 (DDVHH) and 381-386 (HDQVGN).

Belongs to the glycosyl hydrolase 13 family.

Its subcellular location is the cytoplasm. The catalysed reaction is hydrolysis of (1-&gt;4)-alpha-D-glucosidic linkage in 4-alpha-D-[(1-&gt;4)-alpha-D-glucanosyl]n trehalose to yield trehalose and (1-&gt;4)-alpha-D-glucan.. The protein operates within glycan biosynthesis; trehalose biosynthesis. In Arthrobacter ramosus, this protein is Malto-oligosyltrehalose trehalohydrolase (treZ).